The following is a 295-amino-acid chain: Maintenance of mitochondrial morphology protein 1 (295 aa).

Topologically, residues 1–12 are lumenal; the sequence is MVQLFHLTFTQG. A helical transmembrane segment spans residues 13-33; the sequence is FFIGQLSVIVIVYIFLRFFLF. Residues 34–295 lie on the Cytoplasmic side of the membrane; the sequence is CTKEELKNVQ…REGHRQKSTE (262 aa). The SMP-LTD domain maps to 81-278; that stretch reads EEESLDWFNV…SPQFQQISIP (198 aa).

It belongs to the MMM1 family. In terms of assembly, homodimer. Component of the ER-mitochondria encounter structure (ERMES) or MDM complex, composed of mmm1, mdm10, mdm12 and mdm34. A mmm1 homodimer associates with one molecule of mdm12 on each side in a pairwise head-to-tail manner, and the SMP-LTD domains of mmm1 and mdm12 generate a continuous hydrophobic tunnel for phospholipid trafficking.

The protein resides in the endoplasmic reticulum membrane. Functionally, component of the ERMES/MDM complex, which serves as a molecular tether to connect the endoplasmic reticulum (ER) and mitochondria. Components of this complex are involved in the control of mitochondrial shape and protein biogenesis, and function in nonvesicular lipid trafficking between the ER and mitochondria. The mdm12-mmm1 subcomplex functions in the major beta-barrel assembly pathway that is responsible for biogenesis of all outer membrane beta-barrel proteins, and acts in a late step after the SAM complex. The mdm10-mdm12-mmm1 subcomplex further acts in the TOM40-specific pathway after the action of the mdm12-mmm1 complex. Essential for establishing and maintaining the structure of mitochondria and maintenance of mtDNA nucleoids. The protein is Maintenance of mitochondrial morphology protein 1 of Schizosaccharomyces japonicus (strain yFS275 / FY16936) (Fission yeast).